A 56-amino-acid polypeptide reads, in one-letter code: Large ribosomal subunit protein bL32 (56 aa).

The disordered stretch occupies residues 1–34; it reads MAVQQNKPTRSKRGMRRSHDALTTSTVSVDKASG.

Belongs to the bacterial ribosomal protein bL32 family.

The sequence is that of Large ribosomal subunit protein bL32 from Sodalis glossinidius (strain morsitans).